A 782-amino-acid chain; its full sequence is Spastin (782 aa).

Residues 1-103 (MVRTKNQSSS…GNAPRGGNSS (103 aa)) form a disordered region. Residues 1-115 (MVRTKNQSSS…KQNLYVVSFP (115 aa)) are Cytoplasmic-facing. The required for localization to punctate cytoplasmic foci stretch occupies residues 1 to 212 (MVRTKNQSSS…RAIQPLEMAG (212 aa)). The span at 8–19 (SSSSSASSSTKS) shows a compositional bias: low complexity. The span at 25–34 (GGTTNRSRSC) shows a compositional bias: polar residues. Low complexity-rich tracts occupy residues 44-75 (SKSS…GSSP) and 84-93 (TTDADLTPTS). The segment at residues 116-136 (IIFLFNVLRSLIYQLFCIFRY) is an intramembrane region (helical). Residues 137–782 (LYGASTKVIY…WSQDYGDITI (646 aa)) are Cytoplasmic-facing. Residues 210–782 (MAGNRAGGNY…WSQDYGDITI (573 aa)) are sufficient for interaction with microtubules and microtubule severing. One can recognise an MIT domain in the interval 235–310 (HRRAFEYISK…SMARDRLHFL (76 aa)). Positions 325-479 (KEQQQKKKSP…GSGSGASTPM (155 aa)) are disordered. Residues 334 to 343 (PQQQPQQQQQ) show a composition bias toward low complexity. 2 stretches are compositionally biased toward polar residues: residues 408 to 426 (NKSQ…STSV) and 447 to 463 (QFSS…RTPI). Positions 465–479 (NNAAGGSGSGASTPM) are required for interaction with microtubules. ATP is bound at residue 547–554 (GPPGNGKT).

Belongs to the AAA ATPase family. Spastin subfamily. Homohexamer. The homohexamer is stabilized by ATP-binding. The homohexamer may adopt a ring conformation through which microtubules pass prior to being severed. Interacts with microtubules. Interacts with atl; may be involved in microtubule dynamics.

The protein resides in the membrane. The protein localises to the cytoplasm. It localises to the cytoskeleton. Its subcellular location is the microtubule organizing center. It is found in the centrosome. The protein resides in the chromosome. The protein localises to the lipid droplet. The enzyme catalyses n ATP + n H2O + a microtubule = n ADP + n phosphate + (n+1) alpha/beta tubulin heterodimers.. ATP-dependent microtubule severing protein. Stimulates microtubule minus-end depolymerization and poleward microtubule flux in the mitotic spindle. Regulates microtubule stability in the neuromuscular junction synapse. Involved in lipid metabolism by regulating the size and distribution of lipid droplets. Involved in axon regeneration by regulating microtubule severing. In Drosophila grimshawi (Hawaiian fruit fly), this protein is Spastin.